A 260-amino-acid chain; its full sequence is Indole-3-glycerol phosphate synthase (260 aa).

Belongs to the TrpC family.

The catalysed reaction is 1-(2-carboxyphenylamino)-1-deoxy-D-ribulose 5-phosphate + H(+) = (1S,2R)-1-C-(indol-3-yl)glycerol 3-phosphate + CO2 + H2O. Its pathway is amino-acid biosynthesis; L-tryptophan biosynthesis; L-tryptophan from chorismate: step 4/5. In Acetivibrio thermocellus (strain ATCC 27405 / DSM 1237 / JCM 9322 / NBRC 103400 / NCIMB 10682 / NRRL B-4536 / VPI 7372) (Clostridium thermocellum), this protein is Indole-3-glycerol phosphate synthase.